We begin with the raw amino-acid sequence, 94 residues long: C-C motif chemokine 26 (94 aa).

Residues 1–23 (MKSFPVAFLVLLIFILSVHRGVT) form the signal peptide. Intrachain disulfides connect C33–C57 and C34–C73.

This sequence belongs to the intercrine beta (chemokine CC) family. As to quaternary structure, monomer.

Its subcellular location is the secreted. Chemoattractant for eosinophils and basophils. Acts as a ligand for C-C chemokine receptor CCR3 which triggers Ca(2+) mobilization in eosinophils. Also acts as a ligand for CX3C chemokine receptor CX3CR1, inducing cell chemotaxis. The polypeptide is C-C motif chemokine 26 (Canis lupus familiaris (Dog)).